The chain runs to 148 residues: Large-conductance mechanosensitive channel (148 aa).

The next 2 helical transmembrane spans lie at 14-34 (VVDM…INTL) and 85-105 (GIFV…FLSV).

The protein belongs to the MscL family. As to quaternary structure, homopentamer.

It is found in the cell inner membrane. Channel that opens in response to stretch forces in the membrane lipid bilayer. May participate in the regulation of osmotic pressure changes within the cell. This Chlorobium phaeobacteroides (strain DSM 266 / SMG 266 / 2430) protein is Large-conductance mechanosensitive channel.